Reading from the N-terminus, the 317-residue chain is 17-beta-hydroxysteroid dehydrogenase type 6 (317 aa).

Positions 1 to 17 are cleaved as a signal peptide; it reads MWFYLVTLVGLYHLLRW. 33–57 serves as a coordination point for NAD(+); sequence FITGCDSGFGNLLARQLDRRGMRVL. N-linked (GlcNAc...) asparagine glycans are attached at residues N71 and N161. Residue S164 coordinates substrate. Y176 acts as the Proton acceptor in catalysis.

The protein belongs to the short-chain dehydrogenases/reductases (SDR) family. As to expression, detected in liver.

The protein localises to the microsome membrane. It localises to the early endosome membrane. The catalysed reaction is all-trans-retinol--[retinol-binding protein] + NAD(+) = all-trans-retinal--[retinol-binding protein] + NADH + H(+). It catalyses the reaction all-trans-retinol + NAD(+) = all-trans-retinal + NADH + H(+). The enzyme catalyses androsterone + NAD(+) = 5alpha-androstan-3,17-dione + NADH + H(+). It carries out the reaction testosterone + NAD(+) = androst-4-ene-3,17-dione + NADH + H(+). The catalysed reaction is 5alpha-androstane-3alpha,17beta-diol + NAD(+) = 17beta-hydroxy-5alpha-androstan-3-one + NADH + H(+). It catalyses the reaction 17beta-estradiol + NAD(+) = estrone + NADH + H(+). The enzyme catalyses 17beta-estradiol + NADP(+) = estrone + NADPH + H(+). It carries out the reaction 3alpha-hydroxy-5alpha-pregnan-20-one + NAD(+) = 5alpha-pregnane-3,20-dione + NADH + H(+). The catalysed reaction is 5alpha-androstane-3beta,17beta-diol + NAD(+) = 17beta-hydroxy-5alpha-androstan-3-one + NADH + H(+). It catalyses the reaction 3beta-hydroxy-5alpha-androstan-17-one + NAD(+) = 5alpha-androstan-3,17-dione + NADH + H(+). With respect to regulation, inhibited by carbenoxolone and phenyl arsenoxide. NAD-dependent oxidoreductase with broad substrate specificity that shows both oxidative and reductive activity (in vitro). Has 17-beta-hydroxysteroid dehydrogenase activity towards various steroids (in vitro). Converts 5-alpha-androstan-3-alpha,17-beta-diol to androsterone and estradiol to estrone (in vitro). Has 3-alpha-hydroxysteroid dehydrogenase activity towards androsterone (in vitro). Has retinol dehydrogenase activity towards all-trans-retinol (in vitro). The protein is 17-beta-hydroxysteroid dehydrogenase type 6 (Hsd17b6) of Mus musculus (Mouse).